Consider the following 269-residue polypeptide: Tryptophan synthase alpha chain (269 aa).

Residues glutamate 49 and aspartate 60 each act as proton acceptor in the active site.

This sequence belongs to the TrpA family. As to quaternary structure, tetramer of two alpha and two beta chains.

The catalysed reaction is (1S,2R)-1-C-(indol-3-yl)glycerol 3-phosphate + L-serine = D-glyceraldehyde 3-phosphate + L-tryptophan + H2O. Its pathway is amino-acid biosynthesis; L-tryptophan biosynthesis; L-tryptophan from chorismate: step 5/5. The alpha subunit is responsible for the aldol cleavage of indoleglycerol phosphate to indole and glyceraldehyde 3-phosphate. The sequence is that of Tryptophan synthase alpha chain from Acidovorax ebreus (strain TPSY) (Diaphorobacter sp. (strain TPSY)).